The chain runs to 72 residues: Translational regulator CsrA (72 aa).

Belongs to the CsrA/RsmA family. In terms of assembly, homodimer; the beta-strands of each monomer intercalate to form a hydrophobic core, while the alpha-helices form wings that extend away from the core.

It is found in the cytoplasm. Functionally, a translational regulator that binds mRNA to regulate translation initiation and/or mRNA stability. Usually binds in the 5'-UTR at or near the Shine-Dalgarno sequence preventing ribosome-binding, thus repressing translation. Its main target seems to be the major flagellin gene, while its function is anatagonized by FliW. This is Translational regulator CsrA from Ruminiclostridium cellulolyticum (strain ATCC 35319 / DSM 5812 / JCM 6584 / H10) (Clostridium cellulolyticum).